The sequence spans 465 residues: MFTKTQILALALSIASAEAVSKGFNYGANKPDGTLKVQADFEAEFRTAKNLETTSGFNSARLYTMIQGTGSTPISAIPAAIAEETTLLLGLWASGGNMDNEIAALKAAINQYGDEFAKLVVGISVGSEDLYRNSEIGVQANAGIGIEPEELVSYIQRVREAIAGTALSGAPIGHVDTWNAWTNGSNAAVAEAVDWLGFDGYPFFQNTMQNSIDDAKALFDESVQKTKAVAGNKEVWITETGWPVSGDSQNLAIASVENAKQFWDEVGCPLFDNVNTWWYILQDASGSSVPNPSFGIVGNTLSTTPLFDLSCSASSKKNSSSASASASGSSAQSTGFVSTTKPAASPSGSSGLGHGGSLGSSGSFSGGHYAGVGSSSVIASPSATPSGSAVPGSSSGPGSSSGSASGSSSGFGSGAAADSTSGTSTSGDSTSSTSATPADFTGAGSRLSGSIFGAAMLVAALAVAL.

The signal sequence occupies residues 1–19 (MFTKTQILALALSIASAEA). The Proton donor role is filled by glutamate 128. N-linked (GlcNAc...) asparagine glycosylation occurs at asparagine 183. Glutamate 239 functions as the Nucleophile in the catalytic mechanism. Residue asparagine 318 is glycosylated (N-linked (GlcNAc...) asparagine). Composition is skewed to low complexity over residues 320–333 (SSAS…SAQS) and 380–438 (SPSA…ATPA). 2 disordered regions span residues 320 to 356 (SSAS…GHGG) and 380 to 440 (SPSA…PADF). Glycine 442 carries the GPI-anchor amidated glycine lipid modification. Positions 443–465 (AGSRLSGSIFGAAMLVAALAVAL) are cleaved as a propeptide — removed in mature form.

This sequence belongs to the glycosyl hydrolase 17 family. Post-translationally, the GPI-anchor is attached to the protein in the endoplasmic reticulum and serves to target the protein to the cell surface. There, the glucosamine-inositol phospholipid moiety is cleaved off and the GPI-modified mannoprotein is covalently attached via its lipidless GPI glycan remnant to the 1,6-beta-glucan of the outer cell wall layer.

The protein resides in the cell membrane. Its subcellular location is the secreted. It localises to the cell wall. The catalysed reaction is Hydrolysis of (1-&gt;3)-beta-D-glucosidic linkages in (1-&gt;3)-beta-D-glucans.. In terms of biological role, glucanases play a role in cell expansion during growth, in cell-cell fusion during mating, and in spore release during sporulation. This enzyme may be involved in beta-glucan degradation and also function biosynthetically as a transglycosylase. This is Probable glucan endo-1,3-beta-glucosidase eglC (eglC) from Emericella nidulans (strain FGSC A4 / ATCC 38163 / CBS 112.46 / NRRL 194 / M139) (Aspergillus nidulans).